A 264-amino-acid chain; its full sequence is Hydroxyethylthiazole kinase (264 aa).

Met-52 serves as a coordination point for substrate. ATP is bound by residues Arg-127 and Thr-173. Gly-200 contributes to the substrate binding site.

Belongs to the Thz kinase family. Requires Mg(2+) as cofactor.

The catalysed reaction is 5-(2-hydroxyethyl)-4-methylthiazole + ATP = 4-methyl-5-(2-phosphooxyethyl)-thiazole + ADP + H(+). It functions in the pathway cofactor biosynthesis; thiamine diphosphate biosynthesis; 4-methyl-5-(2-phosphoethyl)-thiazole from 5-(2-hydroxyethyl)-4-methylthiazole: step 1/1. Its function is as follows. Catalyzes the phosphorylation of the hydroxyl group of 4-methyl-5-beta-hydroxyethylthiazole (THZ). The polypeptide is Hydroxyethylthiazole kinase (Pectobacterium atrosepticum (strain SCRI 1043 / ATCC BAA-672) (Erwinia carotovora subsp. atroseptica)).